A 204-amino-acid chain; its full sequence is MGFFITFEGIEASGKTTQINLLYDYLKSIGKNVIKTREPGGTKIGQKIREILLSKWDEKFPYIAELLLYESDRNIHIQSIVKPSLDAGYIVLSDRYIDSTTAYQHYARGIDYEIVSYLNTLATDGLKPNLTFLIDIPVEISLKRLSESKDRIESEDIEFHKKLREGFLKIAENEKGRFVVIDGTMDIMEIHKIIVDSLKQRSII.

9–16 (GIEASGKT) lines the ATP pocket.

This sequence belongs to the thymidylate kinase family.

The catalysed reaction is dTMP + ATP = dTDP + ADP. In terms of biological role, phosphorylation of dTMP to form dTDP in both de novo and salvage pathways of dTTP synthesis. This Sulfurihydrogenibium sp. (strain YO3AOP1) protein is Thymidylate kinase.